A 307-amino-acid polypeptide reads, in one-letter code: uncharacterized protein (307 aa).

In terms of domain architecture, ABC transporter spans 5–233 (VQTNGLTKTY…NTEYIELVTP (229 aa)). 37–44 (GPNGAGKT) is a binding site for ATP.

This sequence belongs to the ABC transporter superfamily.

This is an uncharacterized protein from Bacillus subtilis (strain 168).